The chain runs to 221 residues: DNA repair and recombination protein RadB (221 aa).

It belongs to the eukaryotic RecA-like protein family. RadB subfamily.

Functionally, involved in DNA repair and in homologous recombination. May regulate the cleavage reactions of the branch-structured DNA. Has a very weak ATPase activity that is not stimulated by DNA. Binds DNA but does not promote DNA strands exchange. The sequence is that of DNA repair and recombination protein RadB from Thermococcus gammatolerans (strain DSM 15229 / JCM 11827 / EJ3).